The primary structure comprises 373 residues: MTGSPRAPHQEHALGEPTVEGLARYIREKDVRRILVLVGAGASVAAGIPDFRSSDTGIYAKLGKYNLDDPTDAFSLTLLREKPEIFYSIARELNLWPGHFQPTAVHHFIRLLQDEGRLLRCCTQNIDGLEKAAGVSPELLVEAHGSFAAAACIECHTPFSIEQNYLEAMSGTVSRCSTCGGIVKPNVVFFGENLPDAFFDALHHDAPIAELVIIIGTSMQVHPFALLPCVVPKSIPRVLMNRERVGGLLFRFPDDPLDTIHDDAVAKEGRSSSSQSRSPSASARREEGGTEDGSSSPNEEVEDASTSSSSDGYGQYGDYYAHPDVCRDVFFRGDCQENVLKLAECLGLREALAKRMRFSGAAPATARKTSNET.

Positions H12–R349 constitute a Deacetylase sirtuin-type domain. NAD(+)-binding positions include G39–Y59 and Q124–D127. The active-site Proton acceptor is the H144. Zn(2+) contacts are provided by C152, C155, C176, and C179. Residues G216–S218 and N241–E243 contribute to the NAD(+) site. The tract at residues D263–Y313 is disordered. Positions S271–S282 are enriched in low complexity. An NAD(+)-binding site is contributed by C335.

It belongs to the sirtuin family. Class I subfamily. Requires Zn(2+) as cofactor.

The protein resides in the nucleus. The catalysed reaction is N(6)-acetyl-L-lysyl-[protein] + NAD(+) + H2O = 2''-O-acetyl-ADP-D-ribose + nicotinamide + L-lysyl-[protein]. In terms of biological role, NAD-dependent deacetylase, which probably acts as a regulator of gene expression believed to help form modified chromatin structures on the genes it regulates. The chain is NAD-dependent protein deacetylase SIR2rp1 (SIR2rp1) from Leishmania major.